The sequence spans 42 residues: Capsid protein G8P (42 aa).

At 1–12 (MGDILTGVSGAE) the chain is on the periplasmic side. A helical membrane pass occupies residues 13 to 34 (AATAMIAAAAIIALVGFTKWGA). Over 35 to 42 (KKVASFFG) the chain is Cytoplasmic.

It belongs to the inovirus capsid protein family. Homomultimerizes. There are several thousands of this protein in the phage capsid.

The protein resides in the virion. It is found in the host membrane. Functionally, self assembles to form a helical capsid wrapping up the viral genomic DNA. The capsid displays a filamentous structure with a length of 760-1950 nm and a width of 6-8 nm. The virion assembly and budding take place at the host inner membrane. This chain is Capsid protein G8P (VIII), found in Xanthomonas phage phiLf (Bacteriophage phi-Lf).